The chain runs to 161 residues: Transcriptional repressor NrdR (161 aa).

Residues 1–11 show a composition bias toward polar residues; that stretch reads MRCPSCSSLDT. Residues 1-20 are disordered; the sequence is MRCPSCSSLDTQVKDSRPTE. The segment at 3-34 is a zinc-finger region; the sequence is CPSCSSLDTQVKDSRPTEDSAVIRRRRVCMAC. In terms of domain architecture, ATP-cone spans 49–139; that stretch reads LTVIKRNGRR…VYRNFREAKD (91 aa).

Belongs to the NrdR family. Zn(2+) is required as a cofactor.

Functionally, negatively regulates transcription of bacterial ribonucleotide reductase nrd genes and operons by binding to NrdR-boxes. This chain is Transcriptional repressor NrdR, found in Rhodopseudomonas palustris (strain BisB18).